A 520-amino-acid chain; its full sequence is Sensory neuron membrane protein 1 (520 aa).

The Cytoplasmic segment spans residues 1–5 (MKPKK). A helical transmembrane segment spans residues 6–26 (LGIIGGSLLAFGILICAIAFP). Over 27 to 451 (PFLRSQVKKQ…KLKTVFKTIS (425 aa)) the chain is Extracellular. N64, N224, and N268 each carry an N-linked (GlcNAc...) asparagine glycan. Disulfide bonds link C264/C329, C293/C348, and C331/C337. The chain crosses the membrane as a helical span at residues 452-472 (IVGFMKWFTIVSGTCVSGAAA). At 473–520 (ALFFKNKDKNKLDITKVTPQKGEEKKWPNQMTISTIQSAAVPPNLDAD) the chain is on the cytoplasmic side.

It belongs to the CD36 family.

It is found in the cell membrane. Functionally, plays an olfactory role that is not restricted to pheromone sensitivity. The polypeptide is Sensory neuron membrane protein 1 (Apis mellifera (Honeybee)).